The chain runs to 283 residues: Formamidopyrimidine-DNA glycosylase (283 aa).

Proline 2 serves as the catalytic Schiff-base intermediate with DNA. The active-site Proton donor is the glutamate 3. Residue lysine 58 is the Proton donor; for beta-elimination activity of the active site. Histidine 100, arginine 119, and arginine 162 together coordinate DNA. An FPG-type zinc finger spans residues 247-283 (DVYGREGEPCRRAGCDGTVQRITQSGRSSFYCAQCQR). The active-site Proton donor; for delta-elimination activity is the arginine 273.

The protein belongs to the FPG family. In terms of assembly, monomer. It depends on Zn(2+) as a cofactor.

It carries out the reaction Hydrolysis of DNA containing ring-opened 7-methylguanine residues, releasing 2,6-diamino-4-hydroxy-5-(N-methyl)formamidopyrimidine.. It catalyses the reaction 2'-deoxyribonucleotide-(2'-deoxyribose 5'-phosphate)-2'-deoxyribonucleotide-DNA = a 3'-end 2'-deoxyribonucleotide-(2,3-dehydro-2,3-deoxyribose 5'-phosphate)-DNA + a 5'-end 5'-phospho-2'-deoxyribonucleoside-DNA + H(+). In terms of biological role, involved in base excision repair of DNA damaged by oxidation or by mutagenic agents. Acts as a DNA glycosylase that recognizes and removes damaged bases. Has a preference for oxidized purines, such as 7,8-dihydro-8-oxoguanine (8-oxoG). Has AP (apurinic/apyrimidinic) lyase activity and introduces nicks in the DNA strand. Cleaves the DNA backbone by beta-delta elimination to generate a single-strand break at the site of the removed base with both 3'- and 5'-phosphates. The sequence is that of Formamidopyrimidine-DNA glycosylase from Ruegeria pomeroyi (strain ATCC 700808 / DSM 15171 / DSS-3) (Silicibacter pomeroyi).